The primary structure comprises 546 residues: CTP synthase (546 aa).

Positions 1 to 266 (MTTRYIFVTG…DQLVTKRFGI (266 aa)) are amidoligase domain. S14 contacts CTP. Position 14 (S14) interacts with UTP. ATP contacts are provided by residues 15–20 (SLGKGI) and D72. The Mg(2+) site is built by D72 and E140. CTP contacts are provided by residues 147-149 (DIE), 187-192 (KTKPTQ), and K223. Residues 187–192 (KTKPTQ) and K223 contribute to the UTP site. 239–241 (KDV) contacts ATP. One can recognise a Glutamine amidotransferase type-1 domain in the interval 291 to 542 (TIGMVGKYIE…VAAAAAYQKR (252 aa)). G352 provides a ligand contact to L-glutamine. The active-site Nucleophile; for glutamine hydrolysis is C379. L-glutamine contacts are provided by residues 380-383 (LGMQ), E403, and R470. Residues H515 and E517 contribute to the active site.

Belongs to the CTP synthase family. In terms of assembly, homotetramer.

It carries out the reaction UTP + L-glutamine + ATP + H2O = CTP + L-glutamate + ADP + phosphate + 2 H(+). The catalysed reaction is L-glutamine + H2O = L-glutamate + NH4(+). The enzyme catalyses UTP + NH4(+) + ATP = CTP + ADP + phosphate + 2 H(+). Its pathway is pyrimidine metabolism; CTP biosynthesis via de novo pathway; CTP from UDP: step 2/2. Allosterically activated by GTP, when glutamine is the substrate; GTP has no effect on the reaction when ammonia is the substrate. The allosteric effector GTP functions by stabilizing the protein conformation that binds the tetrahedral intermediate(s) formed during glutamine hydrolysis. Inhibited by the product CTP, via allosteric rather than competitive inhibition. In terms of biological role, catalyzes the ATP-dependent amination of UTP to CTP with either L-glutamine or ammonia as the source of nitrogen. Regulates intracellular CTP levels through interactions with the four ribonucleotide triphosphates. This Shewanella pealeana (strain ATCC 700345 / ANG-SQ1) protein is CTP synthase.